The primary structure comprises 1206 residues: DNA-directed RNA polymerase subunit beta' (1206 aa).

4 residues coordinate Zn(2+): C60, C62, C75, and C78. Positions 449, 451, and 453 each coordinate Mg(2+). Positions 818, 892, 899, and 902 each coordinate Zn(2+).

Belongs to the RNA polymerase beta' chain family. The RNAP catalytic core consists of 2 alpha, 1 beta, 1 beta' and 1 omega subunit. When a sigma factor is associated with the core the holoenzyme is formed, which can initiate transcription. It depends on Mg(2+) as a cofactor. The cofactor is Zn(2+).

It catalyses the reaction RNA(n) + a ribonucleoside 5'-triphosphate = RNA(n+1) + diphosphate. In terms of biological role, DNA-dependent RNA polymerase catalyzes the transcription of DNA into RNA using the four ribonucleoside triphosphates as substrates. The sequence is that of DNA-directed RNA polymerase subunit beta' from Halalkalibacterium halodurans (strain ATCC BAA-125 / DSM 18197 / FERM 7344 / JCM 9153 / C-125) (Bacillus halodurans).